The following is a 280-amino-acid chain: 4-diphosphocytidyl-2-C-methyl-D-erythritol kinase (280 aa).

The active site involves Lys-9. Pro-93–Ser-103 is a binding site for ATP. Residue Asp-135 is part of the active site.

Belongs to the GHMP kinase family. IspE subfamily.

The catalysed reaction is 4-CDP-2-C-methyl-D-erythritol + ATP = 4-CDP-2-C-methyl-D-erythritol 2-phosphate + ADP + H(+). Its pathway is isoprenoid biosynthesis; isopentenyl diphosphate biosynthesis via DXP pathway; isopentenyl diphosphate from 1-deoxy-D-xylulose 5-phosphate: step 3/6. Its function is as follows. Catalyzes the phosphorylation of the position 2 hydroxy group of 4-diphosphocytidyl-2C-methyl-D-erythritol. The chain is 4-diphosphocytidyl-2-C-methyl-D-erythritol kinase from Syntrophotalea carbinolica (strain DSM 2380 / NBRC 103641 / GraBd1) (Pelobacter carbinolicus).